The primary structure comprises 206 residues: LexA repressor (206 aa).

Positions 28–48 form a DNA-binding region, H-T-H motif; that stretch reads VREIGQAVGLASSSTVHGHLS. Active-site for autocatalytic cleavage activity residues include S128 and K166.

Belongs to the peptidase S24 family. Homodimer.

It catalyses the reaction Hydrolysis of Ala-|-Gly bond in repressor LexA.. Represses a number of genes involved in the response to DNA damage (SOS response), including recA and lexA. In the presence of single-stranded DNA, RecA interacts with LexA causing an autocatalytic cleavage which disrupts the DNA-binding part of LexA, leading to derepression of the SOS regulon and eventually DNA repair. This chain is LexA repressor, found in Bacillus thuringiensis (strain Al Hakam).